A 61-amino-acid polypeptide reads, in one-letter code: [Val1,Thr6]-bradykinyl-Gln,Ser (61 aa).

The N-terminal stretch at 1–22 (MSILKKSLFLVLFLGLVSFSIC) is a signal peptide. The propeptide occupies 23 to 50 (EEEKREAEEEENEDEIEEQSEEKKRFEP). The segment at 25–61 (EKREAEEEENEDEIEEQSEEKKRFEPVPPGFTPFRQS) is disordered. Residues 30-42 (EEEENEDEIEEQS) are compositionally biased toward acidic residues. A 4-hydroxyproline; in form [Val1,Hyp2,Thr6]-Bradykinyl-Gln,Ser and [Val1,Hyp2,Thr6]-Bradykinin modification is found at proline 52.

It belongs to the frog skin active peptide (FSAP) family. Bradykinin-related peptide subfamily. In terms of tissue distribution, expressed by the skin glands.

Its subcellular location is the secreted. In terms of biological role, induces contraction of rat ileum smooth muscle (EC(50)=2.73 uM) but has no activity towards smooth muscle from tail artery, urinary bladder or uterus up to concentrations of 100 uM. Binds to both bradykinin receptor B1 (BDKRB1) and B2 (BDKRB2); the effect via BDKRB1 is stronger. Its function is as follows. [Val1,Hyp2,Thr6]-bradykinin-Gln,Ser: Induces contraction of rat ileum smooth muscle (EC(50)=710 nM) but has no activity towards smooth muscle from tail artery, urinary bladder or uterus up to concentrations of 100 uM. Binds to both bradykinin receptor B1 (BDKRB1) and B2 (BDKRB2); the effect via BDKRB1 is stronger. Induces contraction of guinea pig ileum smooth muscle. This Pithecopus hypochondrialis (Orange-legged leaf frog) protein is [Val1,Thr6]-bradykinyl-Gln,Ser.